A 116-amino-acid polypeptide reads, in one-letter code: Spermadhesin Z13 (116 aa).

2 cysteine pairs are disulfide-bonded: C14–C35 and C58–C79. The CUB domain maps to 14-115 (CGDLYGEEYG…PDFFLIFRRV (102 aa)).

The protein belongs to the spermadhesin family. Homodimer; disulfide-linked. As to expression, seminal plasma.

It localises to the secreted. Its function is as follows. May be involved in the fertilization process. This is Spermadhesin Z13 from Bos taurus (Bovine).